Reading from the N-terminus, the 674-residue chain is DNA ligase (674 aa).

NAD(+) is bound by residues 35 to 39, 84 to 85, and Glu116; these read DAEYD and SL. The active-site N6-AMP-lysine intermediate is the Lys118. NAD(+) contacts are provided by Arg139, Glu176, Lys293, and Lys317. Zn(2+) is bound by residues Cys411, Cys414, Cys429, and Cys435. Residues 593 to 674 form the BRCT domain; the sequence is DGVKPLEGTT…LLALLEEHGV (82 aa).

This sequence belongs to the NAD-dependent DNA ligase family. LigA subfamily. Requires Mg(2+) as cofactor. The cofactor is Mn(2+).

The catalysed reaction is NAD(+) + (deoxyribonucleotide)n-3'-hydroxyl + 5'-phospho-(deoxyribonucleotide)m = (deoxyribonucleotide)n+m + AMP + beta-nicotinamide D-nucleotide.. Its function is as follows. DNA ligase that catalyzes the formation of phosphodiester linkages between 5'-phosphoryl and 3'-hydroxyl groups in double-stranded DNA using NAD as a coenzyme and as the energy source for the reaction. It is essential for DNA replication and repair of damaged DNA. The protein is DNA ligase of Saccharophagus degradans (strain 2-40 / ATCC 43961 / DSM 17024).